A 512-amino-acid polypeptide reads, in one-letter code: Photosystem II CP47 reaction center protein (512 aa).

The next 6 membrane-spanning stretches (helical) occupy residues 21–36 (AVHL…WAGS), 101–115 (IVLS…IWHW), 140–156 (GIHL…FGAF), 203–218 (IAAG…FHLS), 237–252 (VLSS…AFVV), and 457–472 (TFAL…HGAR).

Belongs to the PsbB/PsbC family. PsbB subfamily. PSII is composed of 1 copy each of membrane proteins PsbA, PsbB, PsbC, PsbD, PsbE, PsbF, PsbH, PsbI, PsbJ, PsbK, PsbL, PsbM, PsbT, PsbX, PsbY, PsbZ, Psb30/Ycf12, at least 3 peripheral proteins of the oxygen-evolving complex and a large number of cofactors. It forms dimeric complexes. Binds multiple chlorophylls. PSII binds additional chlorophylls, carotenoids and specific lipids. serves as cofactor.

It localises to the plastid. The protein resides in the chloroplast thylakoid membrane. In terms of biological role, one of the components of the core complex of photosystem II (PSII). It binds chlorophyll and helps catalyze the primary light-induced photochemical processes of PSII. PSII is a light-driven water:plastoquinone oxidoreductase, using light energy to abstract electrons from H(2)O, generating O(2) and a proton gradient subsequently used for ATP formation. This is Photosystem II CP47 reaction center protein from Physcomitrium patens (Spreading-leaved earth moss).